Consider the following 312-residue polypeptide: Olfactory receptor 2L8 (312 aa).

At 1–24 (MENYNQTSTDFILLGLFPPSRIDL) the chain is on the extracellular side. Asn5 carries N-linked (GlcNAc...) asparagine glycosylation. A helical transmembrane segment spans residues 25–48 (FFFILIVFIFLMALIGNLSMILLI). The Cytoplasmic portion of the chain corresponds to 49–56 (FLDTHLHT). Residues 57-78 (PMYFLLSQLSLIDLNYISTIVP) traverse the membrane as a helical segment. Topologically, residues 79-99 (KMASDFLHGNKSISFTGCGIQ) are extracellular. An N-linked (GlcNAc...) asparagine glycan is attached at Asn88. A disulfide bond links Cys96 and Cys188. The helical transmembrane segment at 100 to 119 (SFFFLALGGAEALLLASMAY) threads the bilayer. Topologically, residues 120 to 138 (DRYIAICFPLHYLIRMSKR) are cytoplasmic. The chain crosses the membrane as a helical span at residues 139–157 (VCVLMITGSWIIGSINACA). The Extracellular portion of the chain corresponds to 158 to 194 (HTVYVLHIPYCRSRAINHFFCDVPAMVTLACMDTWVY). The helical transmembrane segment at 195-218 (EGTVFLSATIFLVFPFIGISCSYG) threads the bilayer. Residues 219–235 (QVLFAVYHMKSAEGRKK) lie on the Cytoplasmic side of the membrane. The chain crosses the membrane as a helical span at residues 236–258 (AYLTCSTHLTVVTFYYAPFVYTY). At 259–271 (LRPRSLRSPTEDK) the chain is on the extracellular side. Residues 272-291 (VLAVFYTILTPMLNPIIYSL) traverse the membrane as a helical segment. Residues 292 to 312 (RNKEVMGALTRVSQRICSVKM) are Cytoplasmic-facing.

This sequence belongs to the G-protein coupled receptor 1 family.

It localises to the cell membrane. In terms of biological role, odorant receptor. This chain is Olfactory receptor 2L8 (OR2L8), found in Homo sapiens (Human).